Here is a 238-residue protein sequence, read N- to C-terminus: MGAKQSGPAANGRTRAYSGSDLPSGTGSGGGGADGARAARFAAPVSGAQQPSASAGAAAAAAAAASAPAAPRSRSLGGAVGSASGGRAAQSAFSIPSAGGGGGPYGSQDSVHSSPEDSVGARDRDRPAGGGPGGPRLVIGSLPAHLSPHLFGGFKCPVCSKFVPSDEMDLHLVMCLTKPRITYNEDVLSKDTGECAICLEELQQGDTIARLPCLCIYHKGCIDEWFEVNRSCPEHPSD.

Positions 1 to 137 (MGAKQSGPAA…AGGGPGGPRL (137 aa)) are disordered. Residue Gly2 is the site of N-myristoyl glycine attachment. Phosphoserine is present on residues Ser20, Ser24, Ser75, Ser82, Ser107, Ser110, Ser141, Ser147, and Ser189. Residues 35–77 (GARAARFAAPVSGAQQPSASAGAAAAAAAAASAPAAPRSRSLG) show a composition bias toward low complexity. The segment at 195–236 (CAICLEELQQGDTIARLPCLCIYHKGCIDEWFEVNRSCPEHP) adopts an RING-type; atypical zinc-finger fold.

As to quaternary structure, interacts with UBE2N. Interacts with ZNRF1. Interacts (when phosphorylated) with YWHAE. In terms of processing, phosphorylated; leading to binding to YWHAE. Phosphorylated by MTOR at Ser-147 and dephosphorylated by PP6C. Ser-147 phosphorylation stimulates vesicle-to-cytosol translocation. In terms of tissue distribution, expressed primarily in the nervous system. Expression is more intense in the granular cell layer of hippocampus, Purkinje cell layer of the cerebellum and the granular cell layer of the olfactory bulb. Detected in sensory neurons but not expressed in sympatic or enteric neurons. Expressed in testis, adipose tissue, columnar epithelial cells of the gut.

It localises to the endosome membrane. The protein localises to the lysosome membrane. Its subcellular location is the presynaptic cell membrane. The protein resides in the cytoplasm. It carries out the reaction S-ubiquitinyl-[E2 ubiquitin-conjugating enzyme]-L-cysteine + [acceptor protein]-L-lysine = [E2 ubiquitin-conjugating enzyme]-L-cysteine + N(6)-ubiquitinyl-[acceptor protein]-L-lysine.. Its pathway is protein modification; protein ubiquitination. In terms of biological role, E3 ubiquitin-protein ligase that plays a role in the establishment and maintenance of neuronal transmission and plasticity. Ubiquitinates the Na(+)/K(+) ATPase alpha-1 subunit/ATP1A1 and thereby influences its endocytosis and/or degradation. Also acts as a positive regulator of mTORC1 activation by amino acids, which functions upstream of the V-ATPase and of Rag-GTPases. In turn, phosphorylation by mTOR leads to its inhibition via targeting to the cytosol allowing a self-regulating feedback mechanism. The chain is E3 ubiquitin-protein ligase ZNRF2 (Znrf2) from Mus musculus (Mouse).